An 884-amino-acid polypeptide reads, in one-letter code: Alanine--tRNA ligase (884 aa).

Positions 565, 569, 674, and 678 each coordinate Zn(2+).

The protein belongs to the class-II aminoacyl-tRNA synthetase family. Requires Zn(2+) as cofactor.

Its subcellular location is the cytoplasm. It carries out the reaction tRNA(Ala) + L-alanine + ATP = L-alanyl-tRNA(Ala) + AMP + diphosphate. Its function is as follows. Catalyzes the attachment of alanine to tRNA(Ala) in a two-step reaction: alanine is first activated by ATP to form Ala-AMP and then transferred to the acceptor end of tRNA(Ala). Also edits incorrectly charged Ser-tRNA(Ala) and Gly-tRNA(Ala) via its editing domain. The chain is Alanine--tRNA ligase from Xanthobacter autotrophicus (strain ATCC BAA-1158 / Py2).